Consider the following 316-residue polypeptide: tRNA dimethylallyltransferase (316 aa).

ATP is bound at residue 17–24; it reads GPTASGKT. A substrate-binding site is contributed by 19-24; sequence TASGKT. Interaction with substrate tRNA regions lie at residues 42-45, 166-170, and 247-252; these read DSAL, QRLSR, and RCVGYR.

The protein belongs to the IPP transferase family. Monomer. Mg(2+) serves as cofactor.

It catalyses the reaction adenosine(37) in tRNA + dimethylallyl diphosphate = N(6)-dimethylallyladenosine(37) in tRNA + diphosphate. In terms of biological role, catalyzes the transfer of a dimethylallyl group onto the adenine at position 37 in tRNAs that read codons beginning with uridine, leading to the formation of N6-(dimethylallyl)adenosine (i(6)A). The chain is tRNA dimethylallyltransferase from Salmonella newport (strain SL254).